The chain runs to 119 residues: Protein TusC (119 aa).

It belongs to the DsrF/TusC family. As to quaternary structure, heterohexamer, formed by a dimer of trimers. The hexameric TusBCD complex contains 2 copies each of TusB, TusC and TusD. The TusBCD complex interacts with TusE.

The protein resides in the cytoplasm. Its function is as follows. Part of a sulfur-relay system required for 2-thiolation of 5-methylaminomethyl-2-thiouridine (mnm(5)s(2)U) at tRNA wobble positions. In Serratia proteamaculans (strain 568), this protein is Protein TusC.